The following is a 152-amino-acid chain: Large ribosomal subunit protein uL15 (152 aa).

Residues 31–58 (GASCGFGMRGQKSRSGRPTRPGFEGGQM) form a disordered region.

Belongs to the universal ribosomal protein uL15 family. As to quaternary structure, part of the 50S ribosomal subunit.

In terms of biological role, binds to the 23S rRNA. This is Large ribosomal subunit protein uL15 from Parasynechococcus marenigrum (strain WH8102).